The primary structure comprises 303 residues: MDDLFLVNEINRLKIERDACILAHNYQLPEVQDIADIVGDSLALSRAAAETTNKVIVFCGVKFMAESAKILSPDKTVLIPSKYAGCPLADSITKEQLEMEKKKHPEAEVICYVNSSAEVKAVSDVSCTSSNAVKVVQNSKSNKILFVPDENLAGYVAEQIPDKEIIPWAGHCITHARITVDDVIKAQEEHPEAEMLVHPEVSEEIRENADFVGSTSAIINYAKNSDSKEFIIGTEIGVLHKMKKDSPEKQFYLLSPRLVCENMKMTRLVDVYNSLMNMQYEVFVPENVRIKALGSLEKMISIE.

Positions 24 and 41 each coordinate iminosuccinate. Residue C86 participates in [4Fe-4S] cluster binding. Residues 112 to 114 (YVN) and S129 contribute to the iminosuccinate site. C172 serves as a coordination point for [4Fe-4S] cluster. Residues 198–200 (HPE) and T215 contribute to the iminosuccinate site. C260 lines the [4Fe-4S] cluster pocket.

The protein belongs to the quinolinate synthase family. Type 2 subfamily. It depends on [4Fe-4S] cluster as a cofactor.

Its subcellular location is the cytoplasm. It catalyses the reaction iminosuccinate + dihydroxyacetone phosphate = quinolinate + phosphate + 2 H2O + H(+). Its pathway is cofactor biosynthesis; NAD(+) biosynthesis; quinolinate from iminoaspartate: step 1/1. Functionally, catalyzes the condensation of iminoaspartate with dihydroxyacetone phosphate to form quinolinate. The chain is Quinolinate synthase from Clostridium kluyveri (strain NBRC 12016).